The sequence spans 423 residues: Putative competence-damage inducible protein (423 aa).

It belongs to the CinA family.

The protein is Putative competence-damage inducible protein of Streptococcus pyogenes serotype M1.